Here is a 289-residue protein sequence, read N- to C-terminus: Eukaryotic translation initiation factor 3 subunit G (289 aa).

2 disordered regions span residues 1-31 (MSRL…VISN) and 151-199 (DTMA…GEKM). One can recognise an RRM domain in the interval 209-287 (ATLRVTNVSE…LILRVEFAKK (79 aa)).

This sequence belongs to the eIF-3 subunit G family. In terms of assembly, component of the eukaryotic translation initiation factor 3 (eIF-3) complex.

Its subcellular location is the cytoplasm. Functionally, RNA-binding component of the eukaryotic translation initiation factor 3 (eIF-3) complex, which is involved in protein synthesis of a specialized repertoire of mRNAs and, together with other initiation factors, stimulates binding of mRNA and methionyl-tRNAi to the 40S ribosome. The eIF-3 complex specifically targets and initiates translation of a subset of mRNAs involved in cell proliferation. This subunit can bind 18S rRNA. The chain is Eukaryotic translation initiation factor 3 subunit G from Coccidioides immitis (strain RS) (Valley fever fungus).